We begin with the raw amino-acid sequence, 346 residues long: tRNA N6-adenosine threonylcarbamoyltransferase (346 aa).

The Fe cation site is built by His111 and His115. Substrate contacts are provided by residues Leu134–Gly138, Asp167, Gly180, and Asn277. Asp305 provides a ligand contact to Fe cation.

The protein belongs to the KAE1 / TsaD family. The cofactor is Fe(2+).

The protein resides in the cytoplasm. It carries out the reaction L-threonylcarbamoyladenylate + adenosine(37) in tRNA = N(6)-L-threonylcarbamoyladenosine(37) in tRNA + AMP + H(+). In terms of biological role, required for the formation of a threonylcarbamoyl group on adenosine at position 37 (t(6)A37) in tRNAs that read codons beginning with adenine. Is involved in the transfer of the threonylcarbamoyl moiety of threonylcarbamoyl-AMP (TC-AMP) to the N6 group of A37, together with TsaE and TsaB. TsaD likely plays a direct catalytic role in this reaction. This Bordetella bronchiseptica (strain ATCC BAA-588 / NCTC 13252 / RB50) (Alcaligenes bronchisepticus) protein is tRNA N6-adenosine threonylcarbamoyltransferase.